Here is a 504-residue protein sequence, read N- to C-terminus: Acetylcholine receptor subunit epsilon (504 aa).

An N-terminal signal peptide occupies residues 1-19 (MESGVRILSLLILLHNSLA). Residues 20–240 (SESEESRLIK…IVFNLIIQRK (221 aa)) lie on the Extracellular side of the membrane. N-linked (GlcNAc...) asparagine glycosylation is found at asparagine 88 and asparagine 161. Cysteine 148 and cysteine 162 are disulfide-bonded. Residues 241–265 (PLFYIINIIVPCVLISFLVVLVYFL) form a helical membrane-spanning segment. The Cytoplasmic portion of the chain corresponds to 266-273 (PAKAGGQK). Residues 274-292 (CTVSISVLLAQTVFLFLIA) traverse the membrane as a helical segment. Topologically, residues 293 to 307 (QMVPETSLSVPLIGK) are extracellular. A helical transmembrane segment spans residues 308–329 (YLMFVMFVSTLIVLSCVIVLNV). Residues 330–473 (SLRSPSTHNL…WILIGKVLDV (144 aa)) are Cytoplasmic-facing. A helical membrane pass occupies residues 474–497 (LCFWVALPLFVLGTLAIFLMGHFN). The Extracellular segment spans residues 498–504 (TAPEHPF).

It belongs to the ligand-gated ion channel (TC 1.A.9) family. Acetylcholine receptor (TC 1.A.9.1) subfamily. Epsilon/CHRNE sub-subfamily. As to quaternary structure, pentamer of two alpha chains, and one each of the beta, delta, and gamma (in immature muscle) or epsilon (in mature muscle) chains.

Its subcellular location is the postsynaptic cell membrane. It is found in the cell membrane. It carries out the reaction K(+)(in) = K(+)(out). The enzyme catalyses Na(+)(in) = Na(+)(out). After binding acetylcholine, the AChR responds by an extensive change in conformation that affects all subunits and leads to opening of an ion-conducting channel across the plasma membrane. The chain is Acetylcholine receptor subunit epsilon (chrne) from Xenopus laevis (African clawed frog).